Here is a 301-residue protein sequence, read N- to C-terminus: Retinochrome (301 aa).

Residues 1–17 (MFGNPAMTGLHQFTMWE) are Extracellular-facing. A helical membrane pass occupies residues 18 to 43 (HYFTGSIYLVLGCVVFSLCGMCIIFL). Over 44–54 (ARQSPKPRRKY) the chain is Cytoplasmic. A helical transmembrane segment spans residues 55–76 (AILIHVLITAMAVNGGDPAHAS). The Extracellular segment spans residues 77–94 (SSIVGRWLYGSVGCQLMG). Residues 95–120 (FWGFFGGMSHIWMLFAFAMERYMAVC) traverse the membrane as a helical segment. Residues 121–132 (HREFYQQMPSVY) lie on the Cytoplasmic side of the membrane. Residues 133 to 153 (YSIIVGLMYTFGTFWATMPLL) form a helical membrane-spanning segment. Residues 154-180 (GWASYGLEVHGTSCTINYSVSDESYQS) are Extracellular-facing. Asn170 is a glycosylation site (N-linked (GlcNAc...) asparagine). The chain crosses the membrane as a helical span at residues 181–208 (YVFFLAIFSFIFPMVSGWYAISKAWSGL). Residues 209-230 (SAIPDAEKEKDKDILSEEQLTA) lie on the Cytoplasmic side of the membrane. The chain crosses the membrane as a helical span at residues 231–255 (LAGAFILISLISWSGFGYVAIYSAL). Over 256-264 (THGGAQLSH) the chain is Extracellular. Residues 265-289 (LRGHVPPIMSKTGCALFPLLIFLLT) traverse the membrane as a helical segment. N6-(retinylidene)lysine is present on Lys275. Residues 290–301 (ARSLPKSDTKKP) lie on the Cytoplasmic side of the membrane.

This sequence belongs to the G-protein coupled receptor 1 family. Opsin subfamily. As to expression, mainly stored in myeloid bodies of the inner segments.

Its subcellular location is the membrane. Its function is as follows. Retinochrome is capable of acting as an effective catalyst in the light to convert various isomers of retinal into 11-cis, the form that is required by opsin to resynthesize rhodopsin. This Todarodes pacificus (Japanese flying squid) protein is Retinochrome.